Here is a 47-residue protein sequence, read N- to C-terminus: Potassium channel toxin gamma-KTx 5.2 (47 aa).

Cystine bridges form between C5-C23, C11-C34, C20-C39, and C24-C41.

Belongs to the ergtoxin family. Gamma-KTx 5 subfamily. In terms of tissue distribution, expressed by the venom gland.

The protein localises to the secreted. In terms of biological role, reversibly blocks Kv11/ERG potassium channels. The polypeptide is Potassium channel toxin gamma-KTx 5.2 (Centruroides gracilis (Slenderbrown scorpion)).